Consider the following 159-residue polypeptide: uncharacterized protein (159 aa).

4 helical membrane passes run 22–42 (LFSS…SFTI), 45–65 (PIEY…LLTL), 80–100 (IWVS…SLSL), and 104–124 (FPSL…CLAF).

It is found in the membrane. This is an uncharacterized protein from Schizosaccharomyces pombe (strain 972 / ATCC 24843) (Fission yeast).